We begin with the raw amino-acid sequence, 218 residues long: ER lumen protein-retaining receptor (218 aa).

Residues 1–2 are Lumenal-facing; sequence MN. A helical transmembrane segment spans residues 3–23; sequence LFSFLGDMLHLGSMLILLFKI. At 24–57 the chain is on the cytoplasmic side; that stretch reads KNDKSCAGVSLKSQILFTIVFTARYLDLFTNYVS. A helical transmembrane segment spans residues 58-78; that stretch reads LYITFMKITYIAVSYYTLHLI. The Lumenal segment spans residues 79 to 94; that stretch reads ARKYKFTYDKDHDTFK. A helical membrane pass occupies residues 95-115; sequence IVYLIASCAILSLITYDKTTI. Residues 116–123 are Cytoplasmic-facing; that stretch reads GIYSTFLE. A helical transmembrane segment spans residues 124-144; the sequence is ILWTFSIYLESIAILPQLILL. The Lumenal segment spans residues 145-152; that stretch reads QRTGEVEA. A helical transmembrane segment spans residues 153–173; that stretch reads LTSNYIVLLGGYRAFYLFNWI. Over 174–184 the chain is Cytoplasmic; the sequence is YRITFYNWSGK. Residues 185–205 traverse the membrane as a helical segment; it reads IEMLSGLLQTILYADFFYYYA. Residues 206 to 218 are Lumenal-facing; the sequence is KSRMYGKKLVLPQ.

It belongs to the ERD2 family.

Its subcellular location is the endoplasmic reticulum membrane. Its function is as follows. Required for the retention of luminal endoplasmic reticulum proteins. Determines the specificity of the luminal ER protein retention system. Also required for normal vesicular traffic through the Golgi. The sequence is that of ER lumen protein-retaining receptor (kdelr) from Dictyostelium discoideum (Social amoeba).